Consider the following 648-residue polypeptide: DNA ligase (648 aa).

NAD(+) contacts are provided by residues 30-34 (DEEYD), 79-80 (SM), and Glu108. Lys110 (N6-AMP-lysine intermediate) is an active-site residue. NAD(+) is bound by residues Arg131, Glu165, Lys280, and Lys304. Zn(2+)-binding residues include Cys398, Cys401, Cys414, and Cys419. One can recognise a BRCT domain in the interval 573 to 648 (AKENPFKGKI…LTEDEMRAML (76 aa)).

This sequence belongs to the NAD-dependent DNA ligase family. LigA subfamily. It depends on Mg(2+) as a cofactor. Requires Mn(2+) as cofactor.

It carries out the reaction NAD(+) + (deoxyribonucleotide)n-3'-hydroxyl + 5'-phospho-(deoxyribonucleotide)m = (deoxyribonucleotide)n+m + AMP + beta-nicotinamide D-nucleotide.. In terms of biological role, DNA ligase that catalyzes the formation of phosphodiester linkages between 5'-phosphoryl and 3'-hydroxyl groups in double-stranded DNA using NAD as a coenzyme and as the energy source for the reaction. It is essential for DNA replication and repair of damaged DNA. The protein is DNA ligase of Sulfurovum sp. (strain NBC37-1).